A 154-amino-acid chain; its full sequence is MAARMCCQLDPARDVLCLRPVGAESRGRPLPGPLGALPPSSASAVPADHGSHLSLRGLPVCSFSSAGPCALRFTSARRMETTVNAPWSLPTVLHKRTIGLSGRSMTWIEEYIKDCVFKDWEELGEEIRLKVFVLGGCRHKLVCSPAPCNFFTSA.

Residues 68 to 117 (PCALRFTSARRMETTVNAPWSLPTVLHKRTIGLSGRSMTWIEEYIKDCVF) are mitochondrial targeting sequence.

The protein belongs to the orthohepadnavirus protein X family. In terms of assembly, may form homodimer. May interact with host CEBPA, CFLAR, CREB1, DDB1, E4F1, HBXIP, HSPD1/HSP60, NFKBIA, POLR2E and SMAD4. Interacts with host SMC5-SMC6 complex and induces its degradation. Interacts with host TRPC4AP; leading to prevent ubiquitination of TRPC4AP. Interacts with host PLSCR1; this interaction promotes ubiquitination and degradation of HBx and impairs HBx-mediated cell proliferation. In terms of processing, a fraction may be phosphorylated in insect cells and HepG2 cells, a human hepatoblastoma cell line. Phosphorylated in vitro by host protein kinase C or mitogen-activated protein kinase. N-acetylated in insect cells.

The protein localises to the host cytoplasm. It localises to the host nucleus. Its subcellular location is the host mitochondrion. Its function is as follows. Multifunctional protein that plays a role in silencing host antiviral defenses and promoting viral transcription. Does not seem to be essential for HBV infection. May be directly involved in development of cirrhosis and liver cancer (hepatocellular carcinoma). Most of cytosolic activities involve modulation of cytosolic calcium. The effect on apoptosis is controversial depending on the cell types in which the studies have been conducted. May induce apoptosis by localizing in mitochondria and causing loss of mitochondrial membrane potential. May also modulate apoptosis by binding host CFLAR, a key regulator of the death-inducing signaling complex (DISC). Promotes viral transcription by using the host E3 ubiquitin ligase DDB1 to target the SMC5-SMC6 complex to proteasomal degradation. This host complex would otherwise bind to viral episomal DNA, and prevents its transcription. Moderately stimulates transcription of many different viral and cellular transcription elements. Promoters and enhancers stimulated by HBx contain DNA binding sites for NF-kappa-B, AP-1, AP-2, c-EBP, ATF/CREB, or the calcium-activated factor NF-AT. This Homo sapiens (Human) protein is Protein X.